The sequence spans 160 residues: Deoxyuridine 5'-triphosphate nucleotidohydrolase (160 aa).

Substrate-binding positions include 72-74 (RSG), Asn-85, and 89-91 (TID).

It belongs to the dUTPase family. The cofactor is Mg(2+).

It catalyses the reaction dUTP + H2O = dUMP + diphosphate + H(+). It functions in the pathway pyrimidine metabolism; dUMP biosynthesis; dUMP from dCTP (dUTP route): step 2/2. Functionally, this enzyme is involved in nucleotide metabolism: it produces dUMP, the immediate precursor of thymidine nucleotides and it decreases the intracellular concentration of dUTP so that uracil cannot be incorporated into DNA. The chain is Deoxyuridine 5'-triphosphate nucleotidohydrolase from Methylocella silvestris (strain DSM 15510 / CIP 108128 / LMG 27833 / NCIMB 13906 / BL2).